The sequence spans 262 residues: Flap endonuclease Xni (262 aa).

Asp-105 provides a ligand contact to Mg(2+). Residues 162–254 form the 5'-3' exonuclease domain; sequence ERSQFLDLMA…LKDFRVIDSL (93 aa). The K(+) site is built by Leu-172, Ala-173, Pro-181, Ile-183, and Ile-186. The interval 185–190 is interaction with DNA; it reads GIGPKS.

It belongs to the Xni family. Mg(2+) serves as cofactor. Requires K(+) as cofactor.

Has flap endonuclease activity. During DNA replication, flap endonucleases cleave the 5'-overhanging flap structure that is generated by displacement synthesis when DNA polymerase encounters the 5'-end of a downstream Okazaki fragment. The protein is Flap endonuclease Xni of Shewanella baltica (strain OS195).